Consider the following 516-residue polypeptide: D-aminopeptidase (516 aa).

Serine 61 functions as the Nucleophile in the catalytic mechanism. Residue lysine 64 is the Proton donor/acceptor of the active site. An important for specificity region spans residues 476–486 (RRSMDAPAPGD). Position 480 (aspartate 480) interacts with substrate.

Belongs to the peptidase S12 family. In terms of assembly, homodimer.

The enzyme catalyses Release of an N-terminal D-amino acid from a peptide, Xaa-|-Yaa-, in which Xaa is preferably D-Ala, D-Ser or D-Thr. D-amino acid amides and methyl esters also are hydrolyzed, as is glycine amide.. Its activity is regulated as follows. Inhibited by beta-lactam compounds such as 6-aminopenicillic acid, 7-aminocephalosporanic acid, benzylpenicillin and ampicillin. Inhibited by p-chloromercuribenzoate. Functionally, hydrolyzes N-terminal residues in D-amino acid-containing peptides. The polypeptide is D-aminopeptidase (Cereibacter sphaeroides (strain KD131 / KCTC 12085) (Rhodobacter sphaeroides)).